The chain runs to 116 residues: MLKEFKEFALKGNVLDLAIAVVMGAAFNKIVTSLVQYIIMPLIGKLFGSVNFAEDWSFWGIKYGLFIQSIIDFIIIAFALFIFVKIANTVMKKEEKEEEVEENTVLLTEIRDLLKK.

A run of 2 helical transmembrane segments spans residues 7-27 and 64-84; these read EFALKGNVLDLAIAVVMGAAF and GLFIQSIIDFIIIAFALFIFV.

This sequence belongs to the MscL family. Homopentamer.

It localises to the cell membrane. Its function is as follows. Channel that opens in response to stretch forces in the membrane lipid bilayer. May participate in the regulation of osmotic pressure changes within the cell. The polypeptide is Large-conductance mechanosensitive channel (Staphylococcus epidermidis (strain ATCC 35984 / DSM 28319 / BCRC 17069 / CCUG 31568 / BM 3577 / RP62A)).